The primary structure comprises 525 residues: Peptide chain release factor 3 (525 aa).

The tr-type G domain occupies 9 to 276; sequence AKRRTFAIIS…GFTTYAPEPQ (268 aa). GTP-binding positions include 18 to 25, 86 to 90, and 140 to 143; these read SHPDAGKT, DTPGH, and NKFD.

Belongs to the TRAFAC class translation factor GTPase superfamily. Classic translation factor GTPase family. PrfC subfamily.

Its subcellular location is the cytoplasm. Functionally, increases the formation of ribosomal termination complexes and stimulates activities of RF-1 and RF-2. It binds guanine nucleotides and has strong preference for UGA stop codons. It may interact directly with the ribosome. The stimulation of RF-1 and RF-2 is significantly reduced by GTP and GDP, but not by GMP. The sequence is that of Peptide chain release factor 3 from Francisella philomiragia subsp. philomiragia (strain ATCC 25017 / CCUG 19701 / FSC 153 / O#319-036).